The chain runs to 533 residues: Probable anion transporter 4, chloroplastic (533 aa).

Helical transmembrane passes span 117–137, 152–172, 179–199, 203–223, 243–263, 267–287, 342–362, 376–396, 417–437, 438–458, 474–494, and 502–522; these read MLAL…VAIV, IVQS…GTLV, VVMA…PWAA, LWAL…ALPC, IAMA…PILM, GIYG…LVWL, VIVA…WMPI, AWFS…AGFW, IGFI…QPLV, ASAW…GFLI, MCLT…GFFV, and GFIL…NIYA.

It belongs to the major facilitator superfamily. Sodium/anion cotransporter (TC 2.A.1.14) family. In terms of tissue distribution, expressed in leaf veins and root tips.

It localises to the plastid. The protein localises to the chloroplast membrane. Functionally, inorganic phosphate and probable anion transporter. The protein is Probable anion transporter 4, chloroplastic (ANTR4) of Arabidopsis thaliana (Mouse-ear cress).